The sequence spans 1185 residues: DNA-directed RNA polymerase subunit beta' (1185 aa).

Positions 60, 62, 75, and 78 each coordinate Zn(2+). 3 residues coordinate Mg(2+): Asp-449, Asp-451, and Asp-453. Residues Cys-774, Cys-853, Cys-860, and Cys-863 each coordinate Zn(2+).

Belongs to the RNA polymerase beta' chain family. The RNAP catalytic core consists of 2 alpha, 1 beta, 1 beta' and 1 omega subunit. When a sigma factor is associated with the core the holoenzyme is formed, which can initiate transcription. Mg(2+) serves as cofactor. Zn(2+) is required as a cofactor.

The catalysed reaction is RNA(n) + a ribonucleoside 5'-triphosphate = RNA(n+1) + diphosphate. Its function is as follows. DNA-dependent RNA polymerase catalyzes the transcription of DNA into RNA using the four ribonucleoside triphosphates as substrates. In Desulforamulus reducens (strain ATCC BAA-1160 / DSM 100696 / MI-1) (Desulfotomaculum reducens), this protein is DNA-directed RNA polymerase subunit beta'.